The sequence spans 457 residues: C4-dicarboxylate transport protein (457 aa).

7 consecutive transmembrane segments (helical) span residues leucine 20–alanine 42, alanine 51–alanine 73, alanine 88–valine 110, leucine 138–glycine 158, leucine 166–valine 188, isoleucine 212–valine 234, and alanine 241–serine 263.

Belongs to the dicarboxylate/amino acid:cation symporter (DAACS) (TC 2.A.23) family.

The protein localises to the cell inner membrane. In terms of biological role, responsible for the transport of dicarboxylates such as succinate, fumarate, and malate from the periplasm across the membrane. In Xanthomonas axonopodis pv. citri (strain 306), this protein is C4-dicarboxylate transport protein.